The following is a 299-amino-acid chain: ATP synthase gamma chain (299 aa).

It belongs to the ATPase gamma chain family. As to quaternary structure, F-type ATPases have 2 components, CF(1) - the catalytic core - and CF(0) - the membrane proton channel. CF(1) has five subunits: alpha(3), beta(3), gamma(1), delta(1), epsilon(1). CF(0) has three main subunits: a, b and c.

The protein resides in the cell membrane. Functionally, produces ATP from ADP in the presence of a proton gradient across the membrane. The gamma chain is believed to be important in regulating ATPase activity and the flow of protons through the CF(0) complex. This chain is ATP synthase gamma chain, found in Clavibacter sepedonicus (Clavibacter michiganensis subsp. sepedonicus).